Reading from the N-terminus, the 339-residue chain is NADH-quinone oxidoreductase subunit H (339 aa).

The next 9 membrane-spanning stretches (helical) occupy residues 9–29 (IFPL…LILC), 50–70 (PNVV…KLLF), 82–102 (ILFV…WAVI), 115–135 (VGVL…IIAG), 161–181 (MGLV…SQIV), 187–207 (MPWW…ISVL), 235–255 (MGFA…SAMT), 275–295 (IPGF…FLWI), and 311–331 (GWKV…SVLI).

It belongs to the complex I subunit 1 family. In terms of assembly, NDH-1 is composed of 14 different subunits. Subunits NuoA, H, J, K, L, M, N constitute the membrane sector of the complex.

It localises to the cell inner membrane. It catalyses the reaction a quinone + NADH + 5 H(+)(in) = a quinol + NAD(+) + 4 H(+)(out). Its function is as follows. NDH-1 shuttles electrons from NADH, via FMN and iron-sulfur (Fe-S) centers, to quinones in the respiratory chain. The immediate electron acceptor for the enzyme in this species is believed to be ubiquinone. Couples the redox reaction to proton translocation (for every two electrons transferred, four hydrogen ions are translocated across the cytoplasmic membrane), and thus conserves the redox energy in a proton gradient. This subunit may bind ubiquinone. In Rickettsia bellii (strain RML369-C), this protein is NADH-quinone oxidoreductase subunit H.